Here is a 178-residue protein sequence, read N- to C-terminus: Thymidine kinase (178 aa).

13 to 20 is an ATP binding site; it reads GPMFAGKS. Residue E85 is the Proton acceptor of the active site. Substrate is bound at residue F115. Zn(2+) contacts are provided by C140 and C143. Position 159 to 163 (159 to 163) interacts with substrate; sequence IEVIG. Zn(2+) contacts are provided by C172 and C175.

It belongs to the thymidine kinase family.

It carries out the reaction thymidine + ATP = dTMP + ADP + H(+). This Oryctolagus cuniculus (Rabbit) protein is Thymidine kinase (TK).